A 442-amino-acid chain; its full sequence is 3-phosphoshikimate 1-carboxyvinyltransferase (442 aa).

Residues Lys-25, Ser-26, and Arg-30 each contribute to the 3-phosphoshikimate site. Lys-25 provides a ligand contact to phosphoenolpyruvate. Residues Gly-97 and Arg-125 each contribute to the phosphoenolpyruvate site. 5 residues coordinate 3-phosphoshikimate: Ser-170, Ser-171, Gln-172, Asp-323, and Lys-350. Gln-172 lines the phosphoenolpyruvate pocket. The active-site Proton acceptor is Asp-323. The phosphoenolpyruvate site is built by Arg-354 and Arg-399.

Belongs to the EPSP synthase family. Monomer.

The protein localises to the cytoplasm. The catalysed reaction is 3-phosphoshikimate + phosphoenolpyruvate = 5-O-(1-carboxyvinyl)-3-phosphoshikimate + phosphate. It functions in the pathway metabolic intermediate biosynthesis; chorismate biosynthesis; chorismate from D-erythrose 4-phosphate and phosphoenolpyruvate: step 6/7. Its function is as follows. Catalyzes the transfer of the enolpyruvyl moiety of phosphoenolpyruvate (PEP) to the 5-hydroxyl of shikimate-3-phosphate (S3P) to produce enolpyruvyl shikimate-3-phosphate and inorganic phosphate. This is 3-phosphoshikimate 1-carboxyvinyltransferase from Bartonella tribocorum (strain CIP 105476 / IBS 506).